A 547-amino-acid chain; its full sequence is Glucose-6-phosphate isomerase (547 aa).

Glu-351 acts as the Proton donor in catalysis. Catalysis depends on residues His-382 and Lys-509.

It belongs to the GPI family.

It is found in the cytoplasm. It catalyses the reaction alpha-D-glucose 6-phosphate = beta-D-fructose 6-phosphate. It functions in the pathway carbohydrate biosynthesis; gluconeogenesis. The protein operates within carbohydrate degradation; glycolysis; D-glyceraldehyde 3-phosphate and glycerone phosphate from D-glucose: step 2/4. Catalyzes the reversible isomerization of glucose-6-phosphate to fructose-6-phosphate. The polypeptide is Glucose-6-phosphate isomerase (Coxiella burnetii (strain CbuK_Q154) (Coxiella burnetii (strain Q154))).